A 267-amino-acid polypeptide reads, in one-letter code: Thymidylate synthase (267 aa).

R24 contacts dUMP. A (6R)-5,10-methylene-5,6,7,8-tetrahydrofolate-binding site is contributed by H54. DUMP is bound at residue 129 to 130; it reads RR. Residue C149 is the Nucleophile of the active site. DUMP-binding positions include 169–172, N180, and 210–212; these read RSAD and HVY. D172 contacts (6R)-5,10-methylene-5,6,7,8-tetrahydrofolate. A266 contacts (6R)-5,10-methylene-5,6,7,8-tetrahydrofolate.

It belongs to the thymidylate synthase family. Bacterial-type ThyA subfamily. Homodimer.

Its subcellular location is the cytoplasm. The enzyme catalyses dUMP + (6R)-5,10-methylene-5,6,7,8-tetrahydrofolate = 7,8-dihydrofolate + dTMP. It participates in pyrimidine metabolism; dTTP biosynthesis. Catalyzes the reductive methylation of 2'-deoxyuridine-5'-monophosphate (dUMP) to 2'-deoxythymidine-5'-monophosphate (dTMP) while utilizing 5,10-methylenetetrahydrofolate (mTHF) as the methyl donor and reductant in the reaction, yielding dihydrofolate (DHF) as a by-product. This enzymatic reaction provides an intracellular de novo source of dTMP, an essential precursor for DNA biosynthesis. In Paenarthrobacter aurescens (strain TC1), this protein is Thymidylate synthase.